A 286-amino-acid polypeptide reads, in one-letter code: Ribonuclease H1 (286 aa).

Positions Glu101–Ala115 are enriched in basic and acidic residues. The tract at residues Glu101–Pro127 is disordered. Residues Met136–Lys282 enclose the RNase H type-1 domain. Residues Asp145, Glu186, Asp210, and Asp274 each contribute to the Mg(2+) site.

The protein belongs to the RNase H family. Monomer. It depends on Mg(2+) as a cofactor. As to expression, ubiquitous.

It is found in the cytoplasm. The catalysed reaction is Endonucleolytic cleavage to 5'-phosphomonoester.. With respect to regulation, in the presence of magnesium, manganese is inhibitory. Its function is as follows. Endonuclease that specifically degrades the RNA of RNA-DNA hybrids. Plays a role in RNA polymerase II (RNAp II) transcription termination by degrading R-loop RNA-DNA hybrid formation at G-rich pause sites located downstream of the poly(A) site and behind the elongating RNAp II. The polypeptide is Ribonuclease H1 (RNASEH1) (Homo sapiens (Human)).